We begin with the raw amino-acid sequence, 154 residues long: Toxin YhaV (154 aa).

Homohexamer; forms a complex with PrlF (SohA) with stoichiometry PrlF(2)-YhaV(4), possibly as a YhaV(2)-PrlF(2)-YhaV(2) complex like the MazFE complex. May dimerize in solution.

Toxic component of a type II toxin-antitoxin (TA) system. Has RNase activity in vitro. Acts as a transcription factor. The YhaV/PrlF complex binds the prlF-yhaV operon, probably negatively regulating its expression. This is Toxin YhaV (yhaV) from Escherichia coli O6:H1 (strain CFT073 / ATCC 700928 / UPEC).